The chain runs to 637 residues: Interleukin-17 receptor E (637 aa).

A signal peptide spans 1-23 (MGSPRLAALLLSLPLLLIGLAVS). At 24 to 414 (ARVACPCLRS…VLCPDVSHRH (391 aa)) the chain is on the extracellular side. The interval 87–134 (GSPSLSEESHRISIPSSAISHRGQRTKRAQPSAAEGREHLPEAGSQKC) is disordered. N-linked (GlcNAc...) asparagine glycosylation is found at N278 and N307. The helical transmembrane segment at 415–435 (LGLLILALLALTALVGVVLVL) threads the bilayer. At 436 to 637 (LGRRLLPGSG…TNSPCGFSCL (202 aa)) the chain is on the cytoplasmic side. Positions 447-583 (TRPVLLLHAA…LLRDLPRLLR (137 aa)) constitute an SEFIR domain.

In terms of assembly, forms heterodimers with IL17RA; the heterodimer binds IL17C. In terms of tissue distribution, predominantly expressed in mucosal tissues, including trachea, lung, kidney and stomach. Highly expressed in colon epithelial cells. Also expressed in testis. Low expression, if any, in heart, liver, spleen, or brain. Among CD4 T-helper cells, expressed at high levels in Th17 cells.

The protein resides in the cell membrane. The protein localises to the secreted. Its subcellular location is the cytoplasm. In terms of biological role, specific functional receptor for IL17C, signaling through the NF-kappa-B and MAPK pathways. Requires TRAF3IP2 /ACT1 for signaling. Crucial regulator in innate immunity to bacterial pathogens, such as Citrobacter rodentium. Isoform 4 and isoform 5 may be either cytoplasmic inactive or dominant active forms. Isoform 2 and isoform 3 may act as soluble decoy receptors. The sequence is that of Interleukin-17 receptor E (Il17re) from Mus musculus (Mouse).